The following is an 845-amino-acid chain: SLIT and NTRK-like protein 2 (845 aa).

Positions 1-21 are cleaved as a signal peptide; it reads MLSGVWFLSVLTVAGILQTES. Residues 22-621 lie on the Extracellular side of the membrane; the sequence is RKTAKDICKI…LHTEVPLSVL (600 aa). Disulfide bonds link C29–C35 and C33–C46. LRR repeat units lie at residues 63–84, 87–108, 111–132, 135–156, 159–180, and 182–203; these read RIYQ…EFVN, NAVT…AFSG, TLKR…TFLG, SLEY…AFSK, KLKV…VFRF, and LLTH…GVLE. N-linked (GlcNAc...) asparagine glycosylation is present at N84. The required for interaction with PTPRD stretch occupies residues 167-215; it reads DNLLLSLPSNVFRFVLLTHLDLRGNRLKVMPFAGVLEHIGGIMEIQLEE. An LRRCT 1 domain is found at 216-265; sequence NPWNCTCDLLPLKAWLDTITVFVGEIVCETPFRLHGKDVTQLTRQDLCPR. 2 cysteine pairs are disulfide-bonded: C220–C243 and C222–C263. Residues 263 to 321 form a disordered region; the sequence is CPRKSASDSSQRGSHADTHVQRLSPTMNPALNPTRAPKASRPPKMRNRPTPRVTVSKDR. A compositionally biased stretch (polar residues) spans 283–293; the sequence is QRLSPTMNPAL. One can recognise an LRRNT domain in the interval 331–373; it reads QTKSPVPLTCPSSCVCTSQSSDNGLNVNCQERKFTNISDLQPK. LRR repeat units lie at residues 376–397, 400–421, 424–445, 448–469, 472–493, and 495–516; these read SPKK…DLLE, SLDL…AFTN, SLRR…MFDG, SLQY…TFDA, NLQL…IFGG, and ALTR…GVLD. N421 is a glycosylation site (N-linked (GlcNAc...) asparagine). One can recognise an LRRCT 2 domain in the interval 529-580; that stretch reads NPWDCTCDIMGLKDWTEHANSPVIINEVTCESPAKHAGEILKFLGREAICPD. A helical membrane pass occupies residues 622–642; the sequence is ILGLLVVFILSVCFGAGLFVF. Residues 643–845 are Cytoplasmic-facing; sequence VLKRRKGVPS…LEKQTAISQL (203 aa). Y756 carries the post-translational modification Phosphotyrosine.

This sequence belongs to the SLITRK family. In terms of assembly, interacts with PTPRD; this interaction is PTPRD splicing-dependent and may induce pre-synaptic differentiation. Interacts with NTRK2. Expressed predominantly in the cerebral cortex of the brain but also at low levels in the spinal cord and medulla. Also expressed in some astrocytic brain tumors such as astrocytomas, oligodendrogliomas, glioblastomas, gangliogliomas and primitive neuroectodermal tumors.

The protein localises to the membrane. Its subcellular location is the cell membrane. It is found in the cell projection. It localises to the dendrite. Functionally, it is involved in synaptogenesis and promotes excitatory synapse differentiation. Suppresses neurite outgrowth. Involved in the negative regulation of NTRK2. The polypeptide is SLIT and NTRK-like protein 2 (SLITRK2) (Homo sapiens (Human)).